Consider the following 784-residue polypeptide: Toll-like receptor 2 (784 aa).

The N-terminal stretch at 1–20 (MPHTLWMVWVLGVIISLSKE) is a signal peptide. Topologically, residues 21–587 (ESSNQASLSC…VRLSVSECHR (567 aa)) are extracellular. A disulfide bridge links Cys30 with Cys36. LRR repeat units lie at residues 54-77 (VKSLDLSNNRITYISNSDLQRCVN), 78-101 (LQALVLTSNGINTIEEDSFSSLGS), 102-125 (LEHLDLSYNYLSNLSSSWFKPLSS), 126-150 (LTFLNLLGNPYKTLGETSLFSHLTK), 151-175 (LQILRVGNMDTFTKIQRKDFAGLTF), 176-199 (LEELEIDASDLQSYEPKSLKSIQN), 200-223 (VSHLILHMKQHILLLEIFVDVTSS), 224-250 (VECLELRDTDLDTFRFSELSTGETNSL), 251-278 (IKKFTFRNVKITDESLFQVMKLLNQISG), 279-308 (LLELEFDDCTLNGVGNFRASDNDRVIDPGK), 309-337 (VETLTIRRLHIPRFYLFYDLSTLYSLTER), 338-361 (VKRITVENSKVFLVPCLLSQHLKS), 362-388 (LEYLDLSENLIVEEYLKNSACEDAWPS), 389-414 (LQTLILRQNHLASLEKTGETLLTLKN), 415-437 (LTNVDISKNSFHSMPETCQWPEK), 438-457 (MKYLNLSSTRIHSVTGCIPK), 458-478 (TLEILDVSNNNLNLFSLNLPQ), 479-500 (LKELYISRNKLMTLPDASLLPM), and 501-524 (LLVLKISRNAITTFSKEQLDSFHT). Asn114 is a glycosylation site (N-linked (GlcNAc...) asparagine). Residue Asn199 is glycosylated (N-linked (GlcNAc...) asparagine). Cys353 and Cys382 form a disulfide bridge. An N-linked (GlcNAc...) asparagine glycan is attached at Asn414. An intrachain disulfide couples Cys432 to Cys454. Asn442 is a glycosylation site (N-linked (GlcNAc...) asparagine). An LRRCT domain is found at 525 to 579 (LKTLEAGGNNFICSCEFLSFTQEQQALAKVLIDWPANYLCDSPSHVRGQQVQDVR). The chain crosses the membrane as a helical span at residues 588-608 (TALVSGMCCALFLLILLTGVL). At 609–784 (CHRFHGLWYM…WVNLRAAIKS (176 aa)) the chain is on the cytoplasmic side. Positions 639-782 (ICYDAFVSYS…GFWVNLRAAI (144 aa)) constitute a TIR domain. Residue Lys754 forms a Glycyl lysine isopeptide (Lys-Gly) (interchain with G-Cter in ubiquitin) linkage. Positions 761-778 (YLEWPMDEAQREGFWVNL) match the ATG16L1-binding motif motif.

It belongs to the Toll-like receptor family. As to quaternary structure, interacts with LY96, TLR1 and TLR6 (via extracellular domain). TLR2 seems to exist in heterodimers with either TLR1 or TLR6 before stimulation by the ligand. The heterodimers form bigger oligomers in response to their corresponding ligands as well as further heterotypic associations with other receptors such as CD14 and/or CD36. Binds MYD88 (via TIR domain). Interacts with TICAM1. Interacts with CNPY3. Interacts with ATG16L1. Interacts with PPP1R11. Interacts with TICAM2. Interacts with TIRAP. Ubiquitinated at Lys-754 by PPP1R11, leading to its degradation. Deubiquitinated by USP2. In terms of processing, glycosylation of Asn-442 is critical for secretion of the N-terminal ectodomain of TLR2.

It localises to the membrane. The protein resides in the cytoplasmic vesicle. Its subcellular location is the phagosome membrane. It is found in the membrane raft. Functionally, cooperates with LY96 to mediate the innate immune response to bacterial lipoproteins and other microbial cell wall components. Cooperates with TLR1 or TLR6 to mediate the innate immune response to bacterial lipoproteins or lipopeptides. Acts via MYD88 and TRAF6, leading to NF-kappa-B activation, cytokine secretion and the inflammatory response. May also promote apoptosis in response to lipoproteins. Forms activation clusters composed of several receptors depending on the ligand, these clusters trigger signaling from the cell surface and subsequently are targeted to the Golgi in a lipid-raft dependent pathway. Forms the cluster TLR2:TLR6:CD14:CD36 in response to diacylated lipopeptides and TLR2:TLR1:CD14 in response to triacylated lipopeptides. The protein is Toll-like receptor 2 (TLR2) of Pan troglodytes (Chimpanzee).